We begin with the raw amino-acid sequence, 138 residues long: Centromere protein S (138 aa).

M1 is subject to N-acetylmethionine. Positions 110–138 are disordered; the sequence is RKAQKKKKSEDGSKNSRQPAEAGVVESEN.

Belongs to the TAF9 family. CENP-S/MHF1 subfamily. As to quaternary structure, heterodimer with CENPX, sometimes called MHF; this interaction stabilizes both partners. MHF heterodimers can assemble to form tetrameric structures. MHF also coassemble with CENPT-CENPW heterodimers at centromeres to form the tetrameric CENP-T-W-S-X complex. Forms a discrete complex with FANCM and CENPX, called FANCM-MHF; this interaction, probably mediated by direct binding between CENPS and FANCM, leads to synergistic activation of double-stranded DNA binding and strongly stimulates FANCM-mediated DNA remodeling. Recruited by FANCM to the Fanconi anemia (FA) core complex, which consists of CENPS, CENPX, FANCA, FANCB, FANCC, FANCE, FANCF, FANCG, FANCL, FANCM, FAAP24 and FAAP100. The FA core complex associates with Bloom syndrome (BLM) complex, which consists of at least BLM, DNA topoisomerase 3-alpha (TOP3A), RMI1/BLAP75, RPA1/RPA70 and RPA2/RPA32. The super complex between FA and BLM is called BRAFT. Component of the CENPA-CAD complex, composed of CENPI, CENPK, CENPL, CENPO, CENPP, CENPQ, CENPR and CENPS. The CENPA-CAD complex is probably recruited on centromeres by the CENPA-NAC complex, composed of at least CENPA, CENPC, CENPH, CENPM, CENPN, CENPT and CENPU. As to expression, ubiquitously expressed.

Its subcellular location is the nucleus. It localises to the chromosome. The protein localises to the centromere. It is found in the kinetochore. Its function is as follows. DNA-binding component of the Fanconi anemia (FA) core complex. Required for the normal activation of the FA pathway, leading to monoubiquitination of the FANCI-FANCD2 complex in response to DNA damage, cellular resistance to DNA cross-linking drugs, and prevention of chromosomal breakage. In complex with CENPX (MHF heterodimer), crucial cofactor for FANCM in both binding and ATP-dependent remodeling of DNA. Stabilizes FANCM. In complex with CENPX and FANCM (but not other FANC proteins), rapidly recruited to blocked forks and promotes gene conversion at blocked replication forks. In complex with CENPT, CENPW and CENPX (CENP-T-W-S-X heterotetramer), involved in the formation of a functional kinetochore outer plate, which is essential for kinetochore-microtubule attachment and faithful mitotic progression. As a component of MHF and CENP-T-W-S-X complexes, binds DNA and bends it to form a nucleosome-like structure. DNA-binding function is fulfilled in the presence of CENPX, with the following preference for DNA substates: Holliday junction &gt; double-stranded &gt; splay arm &gt; single-stranded. Does not bind DNA on its own. The sequence is that of Centromere protein S (CENPS) from Homo sapiens (Human).